Reading from the N-terminus, the 652-residue chain is MPPLLTQPEVLERRLKEIPPEPGCYLMRDGEDRILYVGKSKSLRSRVRSYFRSRHDLSPRIRLMTRQVCEIEFIVTDSEAEALALESNLIKNHQPHFNVLLKDDKKYPYLCITWSEAYPRIFITRRRRFRSPLDRFYGPYVDVGLLRRTLFLVKRVFPLRQRPRPLHPDRTCLNYSIGRCPGVCQEKITSEDYHRTLRKVAMVFQGRSDELQRLLDEQMNRYAERLDFESAARVRDQLQGLDQLTADQKMSLPDSSVSRDVLALACDDRLAAVQLFQMRAGKLVGRLGYTADASALAPGLILQRVIEEHYSQVDAVEVPPELLVQHALPQQQLLEDWLTEQRERKVQIHCPKQRQKADLIELVQRNAEFELLRAKQGQEQQALATEDLAQLLEMPTPPRRIEGYDISHIQGSDAVASQVVFIDGLPAKQHYRKYKIRSSSIQSGHSDDFMAMAEIMRRRFRRWARAKADGVDVGALRHKGGSALQTDGLNDWPDVVMIDGGKGQLSAVMEALRELDLHEDLNVCSLAKQREEVFLPGESQPLESEPDQLGVALLRRLRDEAHRFAVSFHRQQRGERMKRSRLSDIPGVGPKRVKDLLAHFHSIDAIQMASVDLLSKAPGVGTALARDIHGFFHPAEEAGQDECSEEPRAHTA.

One can recognise a GIY-YIG domain in the interval 20 to 99; it reads PEPGCYLMRD…IKNHQPHFNV (80 aa). One can recognise a UVR domain in the interval 209-244; the sequence is DELQRLLDEQMNRYAERLDFESAARVRDQLQGLDQL.

This sequence belongs to the UvrC family. As to quaternary structure, interacts with UvrB in an incision complex.

It is found in the cytoplasm. Its function is as follows. The UvrABC repair system catalyzes the recognition and processing of DNA lesions. UvrC both incises the 5' and 3' sides of the lesion. The N-terminal half is responsible for the 3' incision and the C-terminal half is responsible for the 5' incision. In Parasynechococcus marenigrum (strain WH8102), this protein is UvrABC system protein C.